The following is a 96-amino-acid chain: Putative pterin-4-alpha-carbinolamine dehydratase (96 aa).

Belongs to the pterin-4-alpha-carbinolamine dehydratase family.

The enzyme catalyses (4aS,6R)-4a-hydroxy-L-erythro-5,6,7,8-tetrahydrobiopterin = (6R)-L-erythro-6,7-dihydrobiopterin + H2O. This chain is Putative pterin-4-alpha-carbinolamine dehydratase, found in Prochlorococcus marinus (strain MIT 9312).